Consider the following 709-residue polypeptide: Elongation factor G (709 aa).

The tr-type G domain occupies 9 to 296; that stretch reads AKVRNIGIMA…AVVRYLPSPL (288 aa). Residues 18–25, 86–90, and 140–143 each bind GTP; these read AHIDAGKT, DTPGH, and NKLD.

The protein belongs to the TRAFAC class translation factor GTPase superfamily. Classic translation factor GTPase family. EF-G/EF-2 subfamily.

It is found in the cytoplasm. Its function is as follows. Catalyzes the GTP-dependent ribosomal translocation step during translation elongation. During this step, the ribosome changes from the pre-translocational (PRE) to the post-translocational (POST) state as the newly formed A-site-bound peptidyl-tRNA and P-site-bound deacylated tRNA move to the P and E sites, respectively. Catalyzes the coordinated movement of the two tRNA molecules, the mRNA and conformational changes in the ribosome. This is Elongation factor G from Streptomyces griseus subsp. griseus (strain JCM 4626 / CBS 651.72 / NBRC 13350 / KCC S-0626 / ISP 5235).